A 712-amino-acid polypeptide reads, in one-letter code: MPKEHKKRGRRDEQKKRKRDADDDATAKRHKKDDVDAQFQPLDAAHQLHHGGVGEDGELTRPGEVQFYGMLDEDEQEFFKNVDDQLDRNEFASPDERAQWLKNVFKEAEGKELKIANSQSCSRVLERLILLSTPGQLKNIFEKFNGHFLNLVQHRFASHCCEALFLQAAPVVTQELANPERLQTPPSSNPDHIFVSMENLFLFTLAELQEHLGFLMTDRFASHVLRVLLVVLSGSPLERQSKSVLQSKRKEKVDVTGAEKGREWLAEKRAVPQSFLEALEKVINNCVSGMEPHYLRSLATHPLGNPTLQLLLKLELSHFGKSRAKDEKSLIHRLLPDDPIAEGTDSAAFINGLVYDPIGSRLLETIIENAPGKLFKAIYGEFFKERMGSLSRNEIAGYVAGKILERLGKDDLEEAMRQIVDQIPSLVERNRTAIIKTLIERCVARGVDTASIKAQLETAYGGSNGFEVIRILKLSEEDGKPGGEHKQQSPEKLHGSLLAQTMMSVEGPLGNLVFDSLANLSPELSVQLARDPPASRTLQAALTSPNASVIFRRKMIQQFYGKVGELALDPSASRVIDAIWNGTAGLAFIRERIAEELAENEGSLRESYVGRAVWRNWRMDLYKRKRNDWVKQSRYTAGNDGFQSFPESDGDASNSQTRAGKHMTAIELARQKHAAAKAAAQGKKDMKKEKTERHGTGSNSSAVGTKGRVVAQ.

Residues Met-1–Gln-40 are disordered. Basic and acidic residues predominate over residues Arg-10 to Val-35. Pumilio repeat units lie at residues Glu-107–Glu-142, Lys-143–Asn-178, Glu-207–Gln-246, Asp-345–Gly-380, Glu-381–Asp-421, Asn-519–Gln-557, and Gln-558–Glu-595. A compositionally biased stretch (polar residues) spans Asp-640–Arg-658. The disordered stretch occupies residues Asp-640 to Gln-712. The segment covering Gly-682 to Gly-695 has biased composition (basic and acidic residues).

Belongs to the NOP9 family.

The protein localises to the nucleus. It localises to the nucleolus. RNA-binding nucleolar protein required for pre-rRNA processing. Involved in production of 18S rRNA and assembly of small ribosomal subunit. The polypeptide is Nucleolar protein 9 (NOP9) (Leptosphaeria maculans (strain JN3 / isolate v23.1.3 / race Av1-4-5-6-7-8) (Blackleg fungus)).